A 140-amino-acid chain; its full sequence is Con-Ins Im2 (140 aa).

The N-terminal stretch at 1–29 is a signal peptide; the sequence is MALTWPSSPPVLLTLLLSLLALQLCAVYG. 4 disulfide bridges follow: Cys35/Cys123, Cys50/Cys126, Cys62/Cys139, and Cys125/Cys130. The propeptide at 64–110 is c peptide; sequence PRGYVSNWFTKRSAPNKPAETFVDQNLRGVLLNKREALSYLRPREPR. Position 134 is a 4-carboxyglutamate; partial (Glu134).

Belongs to the insulin family. In terms of assembly, heterodimer of A and B chains; disulfide-linked. Expressed by the venom gland.

It is found in the secreted. This venom insulin facilitates prey capture by rapidly inducing hypoglycemic shock. Intraperitoneal injection of this peptide into zebrafish lowers blood glucose with the same potency than human insulin. In vivo, when applied to water, this peptide reduces overall locomotor activity of zebrafish larvae, observed as a significant decrease in the percentage of time spent swimming and movement frequency. This is Con-Ins Im2 from Conus imperialis (Imperial cone).